The sequence spans 624 residues: Chaperone protein HtpG (624 aa).

The interval 1 to 336 is a; substrate-binding; sequence MKGQETRGFQ…SNDLPLNVSR (336 aa). The segment at 337-552 is b; sequence EILQDSSVTR…ADEMSTQMAK (216 aa). Residues 553–624 form a c region; it reads LFAAAGQAAP…IRRMNQLLAS (72 aa).

This sequence belongs to the heat shock protein 90 family. Homodimer.

The protein resides in the cytoplasm. Functionally, molecular chaperone. Has ATPase activity. The chain is Chaperone protein HtpG from Klebsiella pneumoniae subsp. pneumoniae (strain ATCC 700721 / MGH 78578).